A 258-amino-acid polypeptide reads, in one-letter code: Phycoerythrobilin:ferredoxin oxidoreductase (258 aa).

The protein belongs to the HY2 family.

It carries out the reaction (3Z)-phycoerythrobilin + oxidized 2[4Fe-4S]-[ferredoxin] = 15,16-dihydrobiliverdin + reduced 2[4Fe-4S]-[ferredoxin] + 2 H(+). In terms of biological role, catalyzes the two-electron reduction of the C2 and C3(1) diene system of 15,16-dihydrobiliverdin. The protein is Phycoerythrobilin:ferredoxin oxidoreductase of Prochlorococcus marinus (strain NATL1A).